We begin with the raw amino-acid sequence, 183 residues long: Gamma-crystallin N (183 aa).

4 Beta/gamma crystallin 'Greek key' domains span residues 6–46 (GKIT…RVES), 47–89 (GAWV…RPVG), 95–136 (FRID…KVYG), and 138–180 (GAWV…RRVL).

It belongs to the beta/gamma-crystallin family. In terms of assembly, monomer. In terms of tissue distribution, primordially eye-specific. Present in lens nucleus. In the retina, expression in observed in the outer plexiform layer (containing photoreceptors axons and synapses) and photoreceptor outer segments (at protein level). Also detected in the auditory hindbrain where it is highly expressed in the medial nucleus of the trapezoid body, but also present in other nuclei of the superior olivary complex.

Functionally, crystallins are the dominant structural components of the vertebrate eye lens. Also plays an important role for integrity and function of auditory nuclei. The sequence is that of Gamma-crystallin N from Mus musculus (Mouse).